A 365-amino-acid chain; its full sequence is Protein-glutamate methylesterase/protein-glutamine glutaminase 1 (365 aa).

The Response regulatory domain maps to 4–121 (KVLVVDDSQF…SRDSVVLKKR (118 aa)). A 4-aspartylphosphate modification is found at aspartate 55. The disordered stretch occupies residues 138-173 (AARSTTQPSGVRPSALGANLSSSRSPRPASSAPSAP). A compositionally biased stretch (low complexity) spans 158-172 (SSSRSPRPASSAPSA). One can recognise a CheB-type methylesterase domain in the interval 182 to 365 (KLVAIGASTG…QVWQRLVSDV (184 aa)). Residues serine 189, histidine 216, and aspartate 310 contribute to the active site.

This sequence belongs to the CheB family. Phosphorylated by CheA. Phosphorylation of the N-terminal regulatory domain activates the methylesterase activity.

It is found in the cytoplasm. It catalyses the reaction [protein]-L-glutamate 5-O-methyl ester + H2O = L-glutamyl-[protein] + methanol + H(+). The enzyme catalyses L-glutaminyl-[protein] + H2O = L-glutamyl-[protein] + NH4(+). Functionally, involved in chemotaxis. Part of a chemotaxis signal transduction system that modulates chemotaxis in response to various stimuli. Catalyzes the demethylation of specific methylglutamate residues introduced into the chemoreceptors (methyl-accepting chemotaxis proteins or MCP) by CheR. Also mediates the irreversible deamidation of specific glutamine residues to glutamic acid. This chain is Protein-glutamate methylesterase/protein-glutamine glutaminase 1, found in Saccharophagus degradans (strain 2-40 / ATCC 43961 / DSM 17024).